A 290-amino-acid polypeptide reads, in one-letter code: 2-dehydro-3-deoxyphosphooctonate aldolase 1 (290 aa).

N-acetylalanine is present on alanine 2.

Belongs to the KdsA family. Expressed in shoots.

It is found in the cytoplasm. The catalysed reaction is D-arabinose 5-phosphate + phosphoenolpyruvate + H2O = 3-deoxy-alpha-D-manno-2-octulosonate-8-phosphate + phosphate. Its function is as follows. Catalyzes the stereospecific condensation of D-arabinose 5-phosphate and phosphoenolpyruvate to form 3-deoxy-D-manno-octulosonate 8-phosphate (KDO-8-phosphate) and inorganic phosphate. Involved in the biosynthesis of 3-deoxy-D-manno-octulosonate (KDO) which is an indispensable component of rhamnogalacturonan II (RG-II), a structurally complex pectic polysaccharide of the primary cell wall. RG-II is essential for the cell wall integrity of rapidly growing tissues and pollen tube growth and elongation. This Arabidopsis thaliana (Mouse-ear cress) protein is 2-dehydro-3-deoxyphosphooctonate aldolase 1 (KDSA1).